Reading from the N-terminus, the 121-residue chain is UPF0344 protein BT9727_1053 (121 aa).

A run of 4 helical transmembrane segments spans residues 6–26 (ITAWALGLILFFVAYSLYSAG), 38–58 (LMYIIIIVTGFMLYMGIMKTA), 65–85 (WYGLKMIAGILVIGGMEMVLV), and 92–112 (ATGAVWGLFIVALVAVFYLGL).

The protein belongs to the UPF0344 family.

Its subcellular location is the cell membrane. This is UPF0344 protein BT9727_1053 from Bacillus thuringiensis subsp. konkukian (strain 97-27).